The sequence spans 697 residues: Gametogenetin-binding protein 2 (697 aa).

Ser360 bears the Phosphoserine mark.

Interacts with GGN. Expressed in heart, brain, placenta, lung, liver, skeletal muscle, kidney and pancreas. Expressed more abundantly in heart, pancreas and skeletal muscle.

The protein resides in the cytoplasmic vesicle. Functionally, may be involved in spermatogenesis. The sequence is that of Gametogenetin-binding protein 2 (GGNBP2) from Homo sapiens (Human).